A 200-amino-acid polypeptide reads, in one-letter code: Recombination protein RecR (200 aa).

A C4-type zinc finger spans residues 58–75 (CPLCFTLKESKEADCHFC). One can recognise a Toprim domain in the interval 82–177 (QSLCIVASPK…NISRLALGLP (96 aa)).

It belongs to the RecR family.

Functionally, may play a role in DNA repair. It seems to be involved in an RecBC-independent recombinational process of DNA repair. It may act with RecF and RecO. The chain is Recombination protein RecR from Chlamydia pneumoniae (Chlamydophila pneumoniae).